Reading from the N-terminus, the 1512-residue chain is Sterol 3-beta-glucosyltransferase (1512 aa).

Disordered stretches follow at residues 22–50 (FSGS…YHSL) and 150–222 (DEHT…DTDV). The segment covering 156 to 169 (SEEEDSADKEEESI) has biased composition (acidic residues). The span at 190–222 (TTATLITTQITRTKTATTATPTPTPTSSVDTDV) shows a compositional bias: low complexity. Residues 296–331 (LQRVFDLSDEDTFCGNYSAWLIKDVLLQGHVYLTKD) form the GRAM 1 domain. The PH domain occupies 359-520 (SIVYSGNLGL…WCNNITKLIF (162 aa)). In terms of domain architecture, GRAM 2 spans 816 to 880 (RNFQSHFSTN…TDIEEVRASR (65 aa)). UDP-alpha-D-glucose contacts are provided by serine 1024, arginine 1025, aspartate 1027, asparagine 1299, isoleucine 1328, histidine 1330, histidine 1343, serine 1346, glycine 1347, threonine 1348, aspartate 1367, and glutamine 1368. The disordered stretch occupies residues 1450–1512 (YKRHHPVPSG…NNSPSQNSSN (63 aa)). Residues 1467–1493 (TDSDDYDDDEDDDESDKDDEEEEEENS) show a composition bias toward acidic residues. Polar residues predominate over residues 1501 to 1512 (GVNNSPSQNSSN).

Belongs to the glycosyltransferase 28 family.

The protein resides in the cytoplasm. Its subcellular location is the membrane. The catalysed reaction is a sterol + UDP-alpha-D-glucose = a sterol 3-beta-D-glucoside + UDP + H(+). It carries out the reaction ergosterol + UDP-alpha-D-glucose = ergosteryl 3-beta-D-glucoside + UDP + H(+). Its function is as follows. Sterol glycosyltransferase responsible for the glycosylation of ergosterol to form ergosterol-glucoside. The chain is Sterol 3-beta-glucosyltransferase from Candida albicans (strain SC5314 / ATCC MYA-2876) (Yeast).